The chain runs to 123 residues: D-ribose pyranase (123 aa).

His20 serves as the catalytic Proton donor. Substrate-binding positions include Asp28, His90, and 112-114 (YAN).

It belongs to the RbsD / FucU family. RbsD subfamily. As to quaternary structure, homodecamer.

The protein localises to the cytoplasm. The catalysed reaction is beta-D-ribopyranose = beta-D-ribofuranose. Its pathway is carbohydrate metabolism; D-ribose degradation; D-ribose 5-phosphate from beta-D-ribopyranose: step 1/2. Catalyzes the interconversion of beta-pyran and beta-furan forms of D-ribose. This chain is D-ribose pyranase, found in Corynebacterium glutamicum (strain R).